We begin with the raw amino-acid sequence, 335 residues long: Pro-cathepsin H (335 aa).

An N-terminal signal peptide occupies residues 1–22 (MWAVLSLLCAGAWLLGPPACGA). Residues 23–97 (SNLAVSSFEK…DEIRHKYLWS (75 aa)) constitute a propeptide that is removed on maturation. N72 and N101 each carry an N-linked (GlcNAc...) asparagine glycan. 4 disulfides stabilise this stretch: C102/C327, C138/C181, C172/C214, and C272/C322. Positions 107–115 (GNYLRGTGP) are excised as a propeptide. Residue C141 is part of the active site. Residue N230 is glycosylated (N-linked (GlcNAc...) asparagine). Catalysis depends on residues H281 and N301.

The protein belongs to the peptidase C1 family. As to quaternary structure, composed of cathepsin H and mini chain; disulfide-linked. Cathepsin H may be split into heavy and light chain. All chains are held together by disulfide bonds.

Its subcellular location is the lysosome. The catalysed reaction is Hydrolysis of proteins, acting as an aminopeptidase (notably, cleaving Arg-|-Xaa bonds) as well as an endopeptidase.. Functionally, important for the overall degradation of proteins in lysosomes. This is Pro-cathepsin H (CTSH) from Sus scrofa (Pig).